The chain runs to 120 residues: Ribonuclease P protein component 2 (120 aa).

This sequence belongs to the eukaryotic/archaeal RNase P protein component 2 family. In terms of assembly, consists of a catalytic RNA component and at least 4-5 protein subunits. Forms a subcomplex with Rnp3 which stimulates the catalytic RNA.

The protein resides in the cytoplasm. It catalyses the reaction Endonucleolytic cleavage of RNA, removing 5'-extranucleotides from tRNA precursor.. Part of ribonuclease P, a protein complex that generates mature tRNA molecules by cleaving their 5'-ends. The RNA is catalytic, but its KM for pre-tRNA is 170-fold decreased in the presence of the 4 known protein subunits (Rnp1-4). The protein subunits also decrease the amount of Mg(2+) needed for activity. This is Ribonuclease P protein component 2 from Pyrococcus furiosus (strain ATCC 43587 / DSM 3638 / JCM 8422 / Vc1).